The primary structure comprises 505 residues: Maturase K (505 aa).

Belongs to the intron maturase 2 family. MatK subfamily.

The protein localises to the plastid. It is found in the chloroplast. Functionally, usually encoded in the trnK tRNA gene intron. Probably assists in splicing its own and other chloroplast group II introns. The sequence is that of Maturase K from Silene otites (Spanish catchfly).